The sequence spans 1200 residues: Hyalin (1200 aa).

15 HYR domains span residues 1–39 (SSHNPGQSFTTGTTTTVVYTATDAFANVGQCAFTITVTA), 40–123 (TDTT…NVIE), 124–207 (VDTT…NVIE), 208–292 (VDTT…NVIE), 293–376 (VDTT…NVVE), 377–460 (VDTT…NVVE), 461–544 (VDTT…TVEE), 546–629 (VDTT…TVIA), 630–713 (VDTT…TISA), 714–797 (VDTT…VINA), 798–881 (VDTT…TIGT), 882–966 (VDTM…TVFA), 967–1050 (VDTT…TVTA), 1051–1133 (QDTT…TVNT), and 1134–1200 (QDTT…FFSD).

As to quaternary structure, homooligomer in presence of calcium. In terms of processing, glycosylated.

It localises to the secreted. The protein resides in the extracellular space. It is found in the extracellular matrix. Functionally, major constituent of the hyaline layer. The hyaline layer of echinoderm embryos is an extraembryonic matrix that functions as a substrate for cell adhesion through early development. This Strongylocentrotus purpuratus (Purple sea urchin) protein is Hyalin.